Here is a 318-residue protein sequence, read N- to C-terminus: uncharacterized protein (318 aa).

To A.aeolicus AA07 and AA34.

This is an uncharacterized protein from Aquifex aeolicus (strain VF5).